A 486-amino-acid polypeptide reads, in one-letter code: Probable glycine dehydrogenase (decarboxylating) subunit 2 (486 aa).

A disordered region spans residues 1–26 (MLIFESSRPGRQARAQAPKPTAATND). K264 is subject to N6-(pyridoxal phosphate)lysine.

The protein belongs to the GcvP family. C-terminal subunit subfamily. As to quaternary structure, the glycine cleavage system is composed of four proteins: P, T, L and H. In this organism, the P 'protein' is a heterodimer of two subunits. Pyridoxal 5'-phosphate is required as a cofactor.

The enzyme catalyses N(6)-[(R)-lipoyl]-L-lysyl-[glycine-cleavage complex H protein] + glycine + H(+) = N(6)-[(R)-S(8)-aminomethyldihydrolipoyl]-L-lysyl-[glycine-cleavage complex H protein] + CO2. Functionally, the glycine cleavage system catalyzes the degradation of glycine. The P protein binds the alpha-amino group of glycine through its pyridoxal phosphate cofactor; CO(2) is released and the remaining methylamine moiety is then transferred to the lipoamide cofactor of the H protein. In Nitrosococcus oceani (strain ATCC 19707 / BCRC 17464 / JCM 30415 / NCIMB 11848 / C-107), this protein is Probable glycine dehydrogenase (decarboxylating) subunit 2.